The chain runs to 167 residues: tRNA-specific adenosine deaminase (167 aa).

The 112-residue stretch at 6 to 117 (FSHEYWMRHA…DAKTGAAGSL (112 aa)) folds into the CMP/dCMP-type deaminase domain. A Zn(2+)-binding site is contributed by His57. The active-site Proton donor is Glu59. 2 residues coordinate Zn(2+): Cys87 and Cys90.

This sequence belongs to the cytidine and deoxycytidylate deaminase family. As to quaternary structure, homodimer. The cofactor is Zn(2+).

It catalyses the reaction adenosine(34) in tRNA + H2O + H(+) = inosine(34) in tRNA + NH4(+). In terms of biological role, catalyzes the deamination of adenosine to inosine at the wobble position 34 of tRNA(Arg2). Essential for cell viability. The polypeptide is tRNA-specific adenosine deaminase (Escherichia coli (strain K12)).